Here is a 546-residue protein sequence, read N- to C-terminus: Metal transporter Nramp6.2 (546 aa).

8 consecutive transmembrane segments (helical) span residues Phe50–Leu70, Glu83–Ala103, Ser128–Phe150, Ile154–Gly176, Leu187–Val207, Ile233–Leu253, Tyr270–Ile290, and Ile333–Gly353. An N-linked (GlcNAc...) asparagine glycan is attached at Asn371. The next 4 membrane-spanning stretches (helical) occupy residues Thr374–Ala394, Leu397–Leu417, Ile433–Tyr453, and Val473–Leu493.

Belongs to the NRAMP (TC 2.A.55) family.

The protein resides in the membrane. Functionally, probable divalent metal transporter. The polypeptide is Metal transporter Nramp6.2 (Populus trichocarpa (Western balsam poplar)).